The chain runs to 234 residues: Ribonuclease HII (234 aa).

One can recognise an RNase H type-2 domain in the interval 16–207 (ALVAGVDEAG…VRRMLTPKAI (192 aa)). A divalent metal cation-binding residues include Asp-22, Glu-23, and Asp-115.

The protein belongs to the RNase HII family. The cofactor is Mn(2+). Mg(2+) serves as cofactor.

The protein resides in the cytoplasm. The enzyme catalyses Endonucleolytic cleavage to 5'-phosphomonoester.. Endonuclease that specifically degrades the RNA of RNA-DNA hybrids. The chain is Ribonuclease HII from Xylella fastidiosa (strain M23).